The sequence spans 142 residues: Large ribosomal subunit protein uL11 (142 aa).

Belongs to the universal ribosomal protein uL11 family. In terms of assembly, part of the ribosomal stalk of the 50S ribosomal subunit. Interacts with L10 and the large rRNA to form the base of the stalk. L10 forms an elongated spine to which L12 dimers bind in a sequential fashion forming a multimeric L10(L12)X complex. One or more lysine residues are methylated.

In terms of biological role, forms part of the ribosomal stalk which helps the ribosome interact with GTP-bound translation factors. The chain is Large ribosomal subunit protein uL11 from Lachnoclostridium phytofermentans (strain ATCC 700394 / DSM 18823 / ISDg) (Clostridium phytofermentans).